Here is a 225-residue protein sequence, read N- to C-terminus: Histone H1.5 (225 aa).

The tract at residues 1-23 is disordered; the sequence is MSDVAVAETPAVKTPTKASKATK. N-acetylserine is present on Ser2. The segment covering 9-19 has biased composition (low complexity); it reads TPAVKTPTKAS. An H15 domain is found at 37–113; that stretch reads AHPPFINMIT…GANGRFRLAV (77 aa). Residues 145 to 156 show a composition bias toward basic and acidic residues; it reads KKTVAKKTGDKV. Residues 145-225 are disordered; it reads KKTVAKKTGD…RKAVGTAPKA (81 aa). Basic residues predominate over residues 157 to 175; it reads KKVKSPKRIAKPAVKKVTK. Over residues 176-208 the composition is skewed to low complexity; it reads KAAAPTKSAANETAPKKAAATEAAPKKAAVTKA.

Belongs to the histone H1/H5 family.

It is found in the nucleus. Its subcellular location is the chromosome. Its function is as follows. Histones H1 are necessary for the condensation of nucleosome chains into higher-order structures. The sequence is that of Histone H1.5 (hil-5) from Caenorhabditis elegans.